The following is a 192-amino-acid chain: dTTP/UTP pyrophosphatase (192 aa).

Asp72 serves as the catalytic Proton acceptor.

This sequence belongs to the Maf family. YhdE subfamily. The cofactor is a divalent metal cation.

It is found in the cytoplasm. The catalysed reaction is dTTP + H2O = dTMP + diphosphate + H(+). It carries out the reaction UTP + H2O = UMP + diphosphate + H(+). Nucleoside triphosphate pyrophosphatase that hydrolyzes dTTP and UTP. May have a dual role in cell division arrest and in preventing the incorporation of modified nucleotides into cellular nucleic acids. The polypeptide is dTTP/UTP pyrophosphatase (Hydrogenovibrio crunogenus (strain DSM 25203 / XCL-2) (Thiomicrospira crunogena)).